Reading from the N-terminus, the 417-residue chain is MAEIKNYTLNFGPQHPAAHGVLRLVLELDGEVIQRADPHIGLLHRATEKLAENKTFIQSVPYMDRLDYVSMMVNEHGYVLAIERLLGIDVPERAQYIRVLFDEITRVLNHLMWIGAHALDVGAMAVFLYAFREREDLMDVYEAVSGARMHAAYYRPGGVYRDLPDAMPQYKASKIRNEKALAKMNEARSGSVLDFIDDFFTRFPKCVDEYETLLTDNRIWKQRLVGIGVVSPERALQMGLTGPMLRGSGIAWDLRKKQPYEVYDRMDFDVPVGVNGDCYDRYLVRVEEMRQSIRIAKQCIEWLRKNPGPVMTDNHKVAPPSRVGMKTNMEDLIHHFKLFTEGFHVPEGEAYAAVEHPKGEFGIYLVSDGANKPYRLKIRAPGFAHLASLDEMARGHMIADAVTIIGTQDIVFGEIDR.

The protein belongs to the complex I 49 kDa subunit family. NDH-1 is composed of 14 different subunits. Subunits NuoB, C, D, E, F, and G constitute the peripheral sector of the complex.

The protein resides in the cell inner membrane. The enzyme catalyses a quinone + NADH + 5 H(+)(in) = a quinol + NAD(+) + 4 H(+)(out). Functionally, NDH-1 shuttles electrons from NADH, via FMN and iron-sulfur (Fe-S) centers, to quinones in the respiratory chain. The immediate electron acceptor for the enzyme in this species is believed to be ubiquinone. Couples the redox reaction to proton translocation (for every two electrons transferred, four hydrogen ions are translocated across the cytoplasmic membrane), and thus conserves the redox energy in a proton gradient. This is NADH-quinone oxidoreductase subunit D from Burkholderia ambifaria (strain MC40-6).